A 294-amino-acid polypeptide reads, in one-letter code: 4-hydroxy-tetrahydrodipicolinate synthase (294 aa).

Threonine 45 contacts pyruvate. Tyrosine 133 functions as the Proton donor/acceptor in the catalytic mechanism. Residue lysine 161 is the Schiff-base intermediate with substrate of the active site. Isoleucine 203 lines the pyruvate pocket.

It belongs to the DapA family. Homotetramer; dimer of dimers.

The protein resides in the cytoplasm. The catalysed reaction is L-aspartate 4-semialdehyde + pyruvate = (2S,4S)-4-hydroxy-2,3,4,5-tetrahydrodipicolinate + H2O + H(+). It participates in amino-acid biosynthesis; L-lysine biosynthesis via DAP pathway; (S)-tetrahydrodipicolinate from L-aspartate: step 3/4. In terms of biological role, catalyzes the condensation of (S)-aspartate-beta-semialdehyde [(S)-ASA] and pyruvate to 4-hydroxy-tetrahydrodipicolinate (HTPA). The protein is 4-hydroxy-tetrahydrodipicolinate synthase of Shewanella sp. (strain MR-4).